The sequence spans 147 residues: UPF0251 protein NT01CX_1491 (147 aa).

It belongs to the UPF0251 family.

This Clostridium novyi (strain NT) protein is UPF0251 protein NT01CX_1491.